We begin with the raw amino-acid sequence, 445 residues long: Exodeoxyribonuclease 7 large subunit (445 aa).

The protein belongs to the XseA family. Heterooligomer composed of large and small subunits.

It is found in the cytoplasm. It catalyses the reaction Exonucleolytic cleavage in either 5'- to 3'- or 3'- to 5'-direction to yield nucleoside 5'-phosphates.. Functionally, bidirectionally degrades single-stranded DNA into large acid-insoluble oligonucleotides, which are then degraded further into small acid-soluble oligonucleotides. This is Exodeoxyribonuclease 7 large subunit from Xanthomonas oryzae pv. oryzae (strain MAFF 311018).